The chain runs to 550 residues: Methyl-accepting chemotaxis protein PcaY (550 aa).

The Cytoplasmic segment spans residues methionine 1–glycine 19. The helical transmembrane segment at methionine 20–tryptophan 40 threads the bilayer. At alanine 41–glutamine 198 the chain is on the periplasmic side. The interval glycine 44 to arginine 196 is ligand-binding domain. Arginine 71 and asparagine 75 together coordinate benzoate. Residues arginine 71, asparagine 75, and tyrosine 135 each contribute to the salicylate site. A 3,4-dihydroxybenzoate-binding site is contributed by arginine 71 to serine 78. L-quinate-binding positions include arginine 71–serine 78, tyrosine 135, glutamine 142, and asparagine 158. 3,4-dihydroxybenzoate is bound at residue glutamine 169. Residues leucine 199 to isoleucine 219 form a helical membrane-spanning segment. Over alanine 220–valine 550 the chain is Cytoplasmic. In terms of domain architecture, HAMP spans glutamine 221–glycine 273. Residues cysteine 278–arginine 514 enclose the Methyl-accepting transducer domain.

This sequence belongs to the methyl-accepting chemotaxis (MCP) protein family. As to quaternary structure, ligand free PcaY_PP-ligand-binding domain (LBD) is present in a monomer-dimer equilibrium. Only the dimeric LBD is able to bind ligands which in turn causes dimer stabilization.

The protein localises to the cell inner membrane. Functionally, chemotactic-signal transducers respond to changes in the concentration of attractants and repellents in the environment, transduce a signal from the outside to the inside of the cell, and facilitate sensory adaptation through the variation of the level of methylation. PcaY recognizes a wide range of compounds containing a C6-membered ring with a carboxylate group. Binds preferentially compounds that serve as carbon sources and among them those that rapidly promote growth. Tightest binding compounds are quinate, shikimate, 3-dehydroshikimate and protocatechuate, which are at the interception of the biosynthetic shikimate and catabolic quinate pathways. The protein is Methyl-accepting chemotaxis protein PcaY of Pseudomonas putida (strain ATCC 47054 / DSM 6125 / CFBP 8728 / NCIMB 11950 / KT2440).